The chain runs to 98 residues: Integration host factor subunit beta (98 aa).

The protein belongs to the bacterial histone-like protein family. Heterodimer of an alpha and a beta chain.

This protein is one of the two subunits of integration host factor, a specific DNA-binding protein that functions in genetic recombination as well as in transcriptional and translational control. This Pseudomonas entomophila (strain L48) protein is Integration host factor subunit beta.